Reading from the N-terminus, the 58-residue chain is MRFFHPLYLLLLLLTVLVLISADKHGTKHDFLNLRRKYRRHNCPKKRCLPLHSRVPFP.

The first 22 residues, 1-22, serve as a signal peptide directing secretion; the sequence is MRFFHPLYLLLLLLTVLVLISA.

The protein belongs to the Elabela/Toddler family. In terms of assembly, interacts with aplnra and aplnrb. As to expression, expressed ubiquitously during late blastula and gastrula stages and becomes restricted to the lateral mesoderm, endoderm, and anterior and posterior notochord after gastrulation.

Its subcellular location is the secreted. It is found in the extracellular space. In terms of biological role, peptide hormone that functions as endogenous ligand for the G-protein-coupled apelin receptor (aplnra and/or aplnrb), that plays a role in the regulation of normal cardiovascular function and fluid homeostasis. Functions as a balanced agonist activating both G(i) protein pathway and beta-arrestin pathway of APLNR. Downstream G proteins activation, apelin can inhibit cAMP production and activate key intracellular effectors such as ERKs. On the other hand, APLNR activation induces beta-arrestin recruitment to the membrane leading to desensitization and internalization of the receptor. Required for mesendodermal differentiation, blood vessels formation and heart morphogenesis during early development and for adult cardiovascular homeostasis. Acts as a motogen by promoting mesendodermal cell migration during gastrulation by binding and activating the apelin receptor. Acts as an early embryonic regulator of cellular movement with a role in migration and development of cardiac progenitor cells. May act as a chemoattractant for the activation of angioblast migration toward the embryonic midline, i.e. the position of the future vessel formation, during vasculogenesis. Positively regulates sinus venosus (SV)-derived endothelial cells migration into the developing heart to promote coronary blood vessel sprouting. Involved in cardioprotective functions during heart failure. Mediates myocardial contractility in an ERK1/2-dependent manner. The chain is Apelin receptor early endogenous ligand from Danio rerio (Zebrafish).